Reading from the N-terminus, the 443-residue chain is CBL-interacting protein kinase 29 (443 aa).

The 261-residue stretch at 32–292 (YELGGLLGRG…TEEIITHPWF (261 aa)) folds into the Protein kinase domain. ATP is bound by residues 38–46 (LGRGASAKV) and lysine 61. Aspartate 164 serves as the catalytic Proton acceptor. The segment at 182-207 (DFGLGAVADGALHHTLCGTPAYVAPE) is activation loop. An NAF domain is found at 313 to 347 (AKFKTEFKEDDMARDMTAFDILACSPGSDLSGLFG). Positions 350-379 (PGKERVFVGEPAAAVLSRVEEAGKKEGYMV) are PPI.

It belongs to the protein kinase superfamily. CAMK Ser/Thr protein kinase family. SNF1 subfamily. The cofactor is Mn(2+).

The catalysed reaction is L-seryl-[protein] + ATP = O-phospho-L-seryl-[protein] + ADP + H(+). It carries out the reaction L-threonyl-[protein] + ATP = O-phospho-L-threonyl-[protein] + ADP + H(+). CIPK serine-threonine protein kinases interact with CBL proteins. Binding of a CBL protein to the regulatory NAF domain of CIPK protein lead to the activation of the kinase in a calcium-dependent manner. In Oryza sativa subsp. japonica (Rice), this protein is CBL-interacting protein kinase 29 (CIPK29).